The chain runs to 339 residues: MISFNNVSKVYESGGQSVHAVEDVTLSVEKGEIFGIIGFSGAGKSTLLRLVNMLERPTAGTISIDDKDITSLSTKELRKLRQRIGMIFQSFNLFNSRTVFGNIAYPLKLAKVPKNEIKERVNELLKFVGLEDKANNYPEQLSGGQKQRVGIARALATSPDILICDEATSALDPETTTEILNLLKKVNREYNLTILLITHEMHVVKEICHRVAVMEKGKVIEEGKLFDVFTQPKTTTTQNFVRSVINDHLPESVLAKIQNGGQIYRLTFTGEETGQPVLSYIAKNYNVDVNVLYGNIIELQNVLFGNLLVELQGEQREIQKALQHLRLQVQLKEVEAHAS.

The ABC transporter domain maps to 2 to 241; the sequence is ISFNNVSKVY…PKTTTTQNFV (240 aa). 38-45 contributes to the ATP binding site; that stretch reads GFSGAGKS.

Belongs to the ABC transporter superfamily. Methionine importer (TC 3.A.1.24) family. In terms of assembly, the complex is composed of two ATP-binding proteins (MetN), two transmembrane proteins (MetI) and a solute-binding protein (MetQ).

It is found in the cell membrane. It carries out the reaction L-methionine(out) + ATP + H2O = L-methionine(in) + ADP + phosphate + H(+). The enzyme catalyses D-methionine(out) + ATP + H2O = D-methionine(in) + ADP + phosphate + H(+). Its function is as follows. Part of the ABC transporter complex MetNIQ involved in methionine import. Responsible for energy coupling to the transport system. This chain is Methionine import ATP-binding protein MetN 2, found in Bacillus anthracis.